The following is a 230-amino-acid chain: 2-C-methyl-D-erythritol 4-phosphate cytidylyltransferase (230 aa).

Belongs to the IspD/TarI cytidylyltransferase family. IspD subfamily.

The catalysed reaction is 2-C-methyl-D-erythritol 4-phosphate + CTP + H(+) = 4-CDP-2-C-methyl-D-erythritol + diphosphate. It participates in isoprenoid biosynthesis; isopentenyl diphosphate biosynthesis via DXP pathway; isopentenyl diphosphate from 1-deoxy-D-xylulose 5-phosphate: step 2/6. In terms of biological role, catalyzes the formation of 4-diphosphocytidyl-2-C-methyl-D-erythritol from CTP and 2-C-methyl-D-erythritol 4-phosphate (MEP). The polypeptide is 2-C-methyl-D-erythritol 4-phosphate cytidylyltransferase (Nocardia farcinica (strain IFM 10152)).